We begin with the raw amino-acid sequence, 616 residues long: Dihydroxy-acid dehydratase (616 aa).

Aspartate 81 contributes to the Mg(2+) binding site. Cysteine 122 is a binding site for [2Fe-2S] cluster. Mg(2+)-binding residues include aspartate 123 and lysine 124. The residue at position 124 (lysine 124) is an N6-carboxylysine. [2Fe-2S] cluster is bound at residue cysteine 195. Glutamate 491 provides a ligand contact to Mg(2+). Serine 517 serves as the catalytic Proton acceptor.

This sequence belongs to the IlvD/Edd family. Homodimer. The cofactor is [2Fe-2S] cluster. Mg(2+) is required as a cofactor.

The enzyme catalyses (2R)-2,3-dihydroxy-3-methylbutanoate = 3-methyl-2-oxobutanoate + H2O. It carries out the reaction (2R,3R)-2,3-dihydroxy-3-methylpentanoate = (S)-3-methyl-2-oxopentanoate + H2O. It participates in amino-acid biosynthesis; L-isoleucine biosynthesis; L-isoleucine from 2-oxobutanoate: step 3/4. The protein operates within amino-acid biosynthesis; L-valine biosynthesis; L-valine from pyruvate: step 3/4. In terms of biological role, functions in the biosynthesis of branched-chain amino acids. Catalyzes the dehydration of (2R,3R)-2,3-dihydroxy-3-methylpentanoate (2,3-dihydroxy-3-methylvalerate) into 2-oxo-3-methylpentanoate (2-oxo-3-methylvalerate) and of (2R)-2,3-dihydroxy-3-methylbutanoate (2,3-dihydroxyisovalerate) into 2-oxo-3-methylbutanoate (2-oxoisovalerate), the penultimate precursor to L-isoleucine and L-valine, respectively. In Klebsiella pneumoniae (strain 342), this protein is Dihydroxy-acid dehydratase.